A 400-amino-acid polypeptide reads, in one-letter code: tRNA(Met) cytidine acetate ligase (400 aa).

Residues 7–20, glycine 102, asparagine 165, and arginine 190 contribute to the ATP site; that span reads ITEY…HIYH.

The protein belongs to the TmcAL family.

The protein resides in the cytoplasm. It carries out the reaction cytidine(34) in elongator tRNA(Met) + acetate + ATP = N(4)-acetylcytidine(34) in elongator tRNA(Met) + AMP + diphosphate. Its function is as follows. Catalyzes the formation of N(4)-acetylcytidine (ac(4)C) at the wobble position of elongator tRNA(Met), using acetate and ATP as substrates. First activates an acetate ion to form acetyladenylate (Ac-AMP) and then transfers the acetyl group to tRNA to form ac(4)C34. The sequence is that of tRNA(Met) cytidine acetate ligase from Clostridium novyi (strain NT).